The chain runs to 259 residues: Eukaryotic translation initiation factor 4E1 (259 aa).

The disordered stretch occupies residues 1–70; the sequence is MQSDFHRMKN…TATTTAPAGD (70 aa). The segment covering 18–27 has biased composition (polar residues); that stretch reads FKTSAPSTEQ. Over residues 41–51 the composition is skewed to basic and acidic residues; it reads EAKDVKPKEDP. The span at 54 to 70 shows a compositional bias: low complexity; the sequence is TGEPAGNTATTTAPAGD. Residues 100-101, 146-147, and 199-204 each bind mRNA; these read WE and RGKSNK.

The protein belongs to the eukaryotic initiation factor 4E family. As to quaternary structure, eIF4F is a multi-subunit complex, the composition of which varies with external and internal environmental conditions. It is composed of at least eIF4A, eIF4E1 and eIF4G1. Recruited by cup in oocytes and in early embryos, preventing the interaction with eIF4G. The interaction with cup therefore prevents the translation of key transcripts such as oskar (osk) and nanos (nos) in some regions in the early embryo. Interacts with mxt. Interacts with 4E-T and Thor. Forms a RNP containing at least me31B, eIF4E1, cup, tral and pAbp; this interaction is required for the translational silencing of maternal mRNAs during the maternal-to-zygotic transition. In terms of processing, phosphorylation increases the ability of the protein to bind to mRNA caps and to form the eIF4F complex. Expressed at the posterior end of developing oocytes (at protein level). Preferential expression in the pole cells, at different developmental stages.

The protein localises to the cytoplasm. It is found in the cytoplasmic ribonucleoprotein granule. It localises to the nucleus. Its subcellular location is the nuclear body. Functionally, recognizes and binds the 7-methylguanosine (m7G)-containing mRNA cap during an early step in the initiation of protein synthesis and facilitates ribosome binding by inducing the unwinding of the mRNAs secondary structures. In 0-1 hour embryos, forms a complex with me31B, cup, tral and pAbp which binds to various mRNAs including maternal mRNAs, and down-regulates their expression during the maternal-to-zygotic transition. The protein is Eukaryotic translation initiation factor 4E1 of Drosophila melanogaster (Fruit fly).